The primary structure comprises 254 residues: Long form salivary protein D7LC (254 aa).

Positions M1–S19 are cleaved as a signal peptide. Cystine bridges form between C36-C66 and C62-C112. W49 provides a ligand contact to thromboxane A2. W52 is a binding site for leukotriene C4. Y63 is a binding site for thromboxane A2. Leukotriene C4 contacts are provided by G136 and K154. Residue K154 participates in thromboxane A2 binding. Cystine bridges form between C162/C178, C174/C221, and C211/C230.

It belongs to the PBP/GOBP family.

It is found in the secreted. Its function is as follows. Modulates blood feeding of female sandflies on vertebrate species by binding and sequestering different mediators involved in the host response. Binds leukotriene C4, leukotriene D4, leukotriene E4 and U-46619, a stable analog of thromboxane A2. Does not bind histamine or serotonin. Inhibits platelet aggregation induced by low concentrations of collagen in thromboxane A2-dependent manner. The sequence is that of Long form salivary protein D7LC from Phlebotomus papatasi (Sandfly).